Reading from the N-terminus, the 192-residue chain is Cytochrome c4 (192 aa).

Cytochrome c domains are found at residues 12–90 (GDPQ…ATQP) and 99–191 (ELAS…QGLS). Heme c-binding residues include C25, C28, H29, C120, C123, and H124.

In terms of processing, binds 2 heme c groups covalently per subunit.

It localises to the periplasm. Its function is as follows. Diheme, high potential cytochrome c believed to be an intermediate electron donor in an anaerobic electron transport chain. This is Cytochrome c4 from Thiocapsa roseopersicina.